Reading from the N-terminus, the 342-residue chain is Epoxide hydrolase srdG (342 aa).

Positions 44–332 (ATVLLLHGWP…LIHTPEEVNK (289 aa)) constitute an AB hydrolase-1 domain. Asp-122 (nucleophile) is an active-site residue. His-320 acts as the Proton acceptor in catalysis.

It belongs to the AB hydrolase superfamily. Epoxide hydrolase family.

Its function is as follows. Highly reducing polyketide synthase; part of the gene cluster that mediates the biosynthesis of sordarial, a salicylic aldehyde structurally related to the phytotoxin pyriculol. The most interesting aspect of this pathway is formation of an aromatic product from the highly reducing polyketide synthase srdA. SrdA synthesizes a reduced polyketide chain from one molecule of acetyl-CoA and five molecules of malonyl-CoA. The polyketide chain is then reductively released as an aldehyde. The oxidoreductases srdC, srdD and srdE then oxidize one of the hydroxy groups to facilitate the intramolecular aldol condensation, followed by dehydration to yield a salicylic aldehyde. This aldehyde can undergo facile reduction by endogenous reductases to yield the alcohol 1-hydroxy-2-hydroxymethyl-3-pent-1,3-dienylbenzene. The flavin-dependent srdI counteract against the propensity of the aldehydes to be reduced under physiological conditions and is responsible for reoxidizing 1-hydroxy-2-hydroxymethyl-3-pent-1,3-dienylbenzene back to the salicylic aldehyde. This salicylic aldehyde is then selectively epoxidized by the cupin-domain-containing oxidoreductase srdB to yield the epoxide, which can be hydrolyzed stereoselectively by the hydrolase srdG to give the final product sordarial. This is Epoxide hydrolase srdG from Neurospora crassa (strain ATCC 24698 / 74-OR23-1A / CBS 708.71 / DSM 1257 / FGSC 987).